Consider the following 478-residue polypeptide: Dihydrolipoyl dehydrogenase (478 aa).

FAD-binding positions include 34–49 (EKYIGKEGKVALGGTC), K58, and G122. C49 and C54 are joined by a disulfide. NAD(+)-binding positions include 188-192 (GAGVI), E211, V245, and 276-279 (AVGR). FAD contacts are provided by D319 and A327. H451 acts as the Proton acceptor in catalysis.

The protein belongs to the class-I pyridine nucleotide-disulfide oxidoreductase family. As to quaternary structure, homodimer. FAD is required as a cofactor.

It localises to the cytoplasm. The catalysed reaction is N(6)-[(R)-dihydrolipoyl]-L-lysyl-[protein] + NAD(+) = N(6)-[(R)-lipoyl]-L-lysyl-[protein] + NADH + H(+). Functionally, the branched-chain alpha-keto dehydrogenase complex catalyzes the overall conversion of alpha-keto acids to acyl-CoA and CO(2). It contains multiple copies of 3 enzymatic components: branched-chain alpha-keto acid decarboxylase (E1), lipoamide acyltransferase (E2) and lipoamide dehydrogenase (E3). In Pseudomonas fluorescens, this protein is Dihydrolipoyl dehydrogenase (lpd).